The chain runs to 124 residues: Glucagon-1 (124 aa).

The N-terminal stretch at 1-25 (MKRIHSLAGILLVLGLIQSSCRVLM) is a signal peptide. A disordered region spans residues 28–54 (ADPSSSLEADSTLKDEPRELSNMKRHS). Basic and acidic residues predominate over residues 38–54 (STLKDEPRELSNMKRHS). A propeptide spanning residues 84 to 88 (SGVAE) is cleaved from the precursor.

Belongs to the glucagon family.

Its subcellular location is the secreted. Glucagon plays a key role in glucose metabolism and homeostasis. Regulates blood glucose by increasing gluconeogenesis and decreasing glycolysis. This chain is Glucagon-1 (gcg1), found in Lophius americanus (American angler).